The sequence spans 97 residues: Class II hydrophobin NC2 (97 aa).

The first 17 residues, 1-17 (MQFTIATVLSLLTITLA), serve as a signal peptide directing secretion. Intrachain disulfides connect cysteine 31–cysteine 79, cysteine 40–cysteine 70, cysteine 41–cysteine 53, and cysteine 80–cysteine 91. N-linked (GlcNAc...) asparagine glycosylation occurs at asparagine 62.

The protein belongs to the cerato-ulmin hydrophobin family. Homotrimer. Further self-assembles to form highly ordered films at water-air interfaces through intermolecular interactions.

It is found in the secreted. The protein localises to the cell wall. Functionally, aerial growth, conidiation, and dispersal of filamentous fungi in the environment rely upon a capability of their secreting small amphipathic proteins called hydrophobins (HPBs) with low sequence identity. Class I can self-assemble into an outermost layer of rodlet bundles on aerial cell surfaces, conferring cellular hydrophobicity that supports fungal growth, development and dispersal; whereas Class II form highly ordered films at water-air interfaces through intermolecular interactions but contribute nothing to the rodlet structure. NC2 is a class II hydrophobin that has the potential to adsorb to the hydrophobic interface at the hydrophobic-hydrophilic interface at very high rate but the predicted self-assembly NC2 film possesses a lower flexural rigidity than other class II hydrophobins such as HFBII from Hypocrea jecorina (also known as Trichoderma reesei). This is Class II hydrophobin NC2 from Neurospora crassa (strain ATCC 24698 / 74-OR23-1A / CBS 708.71 / DSM 1257 / FGSC 987).